A 2399-amino-acid chain; its full sequence is Protein DOP1A (2399 aa).

Disordered regions lie at residues 556–598, 619–660, 1105–1124, 1166–1188, 1234–1263, and 1279–1308; these read PSGQ…SSES, NGQG…GAAG, SDSGCSQSSAGDNFSYEVDP, SVTSELEIESLQTKSSDLDPGKE, SPCISGTAQTLNDSSVPSETKSRQRSHSSI, and ETIVKESGKQPGAKPKVKLARKKDEDKKKA. Low complexity-rich tracts occupy residues 629 to 647 and 1105 to 1116; these read GSTSSETETASTVGSEETV and SDSGCSQSSAGD. Composition is skewed to polar residues over residues 1166–1180 and 1234–1252; these read SVTSELEIESLQTKS and SPCISGTAQTLNDSSVPSE. Ser1261 bears the Phosphoserine mark.

This sequence belongs to the DOP1 family.

It is found in the golgi apparatus membrane. May be involved in protein traffic between late Golgi and early endosomes. The chain is Protein DOP1A (Dop1a) from Mus musculus (Mouse).